The chain runs to 491 residues: Glutamyl-tRNA(Gln) amidotransferase subunit A (491 aa).

Catalysis depends on charge relay system residues Lys81 and Ser156. Catalysis depends on Ser180, which acts as the Acyl-ester intermediate.

It belongs to the amidase family. GatA subfamily. In terms of assembly, heterotrimer of A, B and C subunits.

The catalysed reaction is L-glutamyl-tRNA(Gln) + L-glutamine + ATP + H2O = L-glutaminyl-tRNA(Gln) + L-glutamate + ADP + phosphate + H(+). Its function is as follows. Allows the formation of correctly charged Gln-tRNA(Gln) through the transamidation of misacylated Glu-tRNA(Gln) in organisms which lack glutaminyl-tRNA synthetase. The reaction takes place in the presence of glutamine and ATP through an activated gamma-phospho-Glu-tRNA(Gln). In Alcanivorax borkumensis (strain ATCC 700651 / DSM 11573 / NCIMB 13689 / SK2), this protein is Glutamyl-tRNA(Gln) amidotransferase subunit A.